A 63-amino-acid polypeptide reads, in one-letter code: Large ribosomal subunit protein uL30 (63 aa).

This sequence belongs to the universal ribosomal protein uL30 family. As to quaternary structure, part of the 50S ribosomal subunit.

This Granulibacter bethesdensis (strain ATCC BAA-1260 / CGDNIH1) protein is Large ribosomal subunit protein uL30.